Reading from the N-terminus, the 453-residue chain is Alpha-2B adrenergic receptor (453 aa).

Over 1-17 (MSGPTMDHQEPYSVQAT) the chain is Extracellular. A helical transmembrane segment spans residues 18-42 (AAIASAITFLILFTIFGNALVILAV). Residues 43–54 (LTSRSLRAPQNL) are Cytoplasmic-facing. Residues 55-80 (FLVSLAAADILVATLIIPFSLANELL) form a helical membrane-spanning segment. Over 81–90 (GYWYFWRAWC) the chain is Extracellular. C90 and C169 are oxidised to a cystine. The chain crosses the membrane as a helical span at residues 91–113 (EVYLALDVLFCTSSIVHLCAISL). Over 114–135 (DRYWAVSRALEYNSKRTPRRIK) the chain is Cytoplasmic. The helical transmembrane segment at 136 to 158 (CIILTVWLIAAVISLPPLIYKGD) threads the bilayer. The Extracellular portion of the chain corresponds to 159 to 174 (QRPEPRGLPQCELNQE). Residues 175–198 (AWYILASSIGSFFAPCLIMILVYL) form a helical membrane-spanning segment. Residues 199 to 375 (RIYVIAKRSH…LSREKRFTFV (177 aa)) lie on the Cytoplasmic side of the membrane. Residues 213 to 331 (GAKRGSGEGE…PASVCNPPLQ (119 aa)) form a disordered region. Over residues 287-297 (GQGQKKGTSGA) the composition is skewed to polar residues. The segment covering 300 to 314 (EEGDEEDEEEVEECE) has biased composition (acidic residues). The chain crosses the membrane as a helical span at residues 376–399 (LAVVIGVFVVCWFPFFFSYSLGAI). Residues 400–408 (CPQHCKVPH) lie on the Extracellular side of the membrane. The chain crosses the membrane as a helical span at residues 409 to 432 (GLFQFFFWIGYCNSSLNPVIYTVF). At 433-453 (NQDFRRAFRRILCRPWTQTGW) the chain is on the cytoplasmic side. The S-palmitoyl cysteine moiety is linked to residue C445.

Belongs to the G-protein coupled receptor 1 family. Adrenergic receptor subfamily. ADRA2B sub-subfamily. As to quaternary structure, interacts with RAB26. Interacts with PPP1R9B. Interacts with GGA1, GGA2 and GGA3.

It localises to the cell membrane. Its function is as follows. Alpha-2 adrenergic receptors mediate the catecholamine-induced inhibition of adenylate cyclase through the action of G proteins. In Rattus norvegicus (Rat), this protein is Alpha-2B adrenergic receptor (Adra2b).